The following is a 2211-amino-acid chain: Norsolorinic acid synthase stcA (2211 aa).

Residues phenylalanine 11–histidine 251 are starter unit:ACP transacylase (SAT) domain. Residues proline 358–serine 378 form a disordered region. A compositionally biased stretch (basic and acidic residues) spans threonine 368 to serine 378. Residues arginine 380–aspartate 812 enclose the Ketosynthase family 3 (KS3) domain. Active-site for beta-ketoacyl synthase activity residues include cysteine 552, histidine 687, and histidine 730. Positions isoleucine 912 to aspartate 1201 are malonyl-CoA:ACP transacylase (MAT) domain. The active-site For acyl/malonyl transferase activity is serine 1004. The interval threonine 1289–alanine 1316 is disordered. Residues histidine 1327 to glutamine 1468 form an N-terminal hotdog fold region. The region spanning histidine 1327 to arginine 1643 is the PKS/mFAS DH domain. The tract at residues threonine 1340–arginine 1643 is product template (PT) domain. Residue histidine 1359 is the Proton acceptor; for dehydratase activity of the active site. The segment at phenylalanine 1495 to arginine 1643 is C-terminal hotdog fold. The active-site Proton donor; for dehydratase activity is the aspartate 1555. Residues arginine 1655–alanine 1706 form a disordered region. Composition is skewed to polar residues over residues glycine 1658–proline 1668 and lysine 1676–histidine 1685. Carrier domains follow at residues arginine 1712 to alanine 1791 and aspartate 1839 to serine 1915. 2 positions are modified to O-(pantetheine 4'-phosphoryl)serine: serine 1749 and serine 1873. The span at glycine 1912–serine 1926 shows a compositional bias: low complexity. The disordered stretch occupies residues glycine 1912–arginine 1947. A compositionally biased stretch (polar residues) spans isoleucine 1934 to aspartate 1945. The tract at residues isoleucine 1969–leucine 2205 is thioesterase/Claisen cyclase (TE/CLC) domain. Serine 2039 acts as the For thioesterase activity in catalysis.

Pantetheine 4'-phosphate serves as cofactor.

The enzyme catalyses hexanoyl-[ACP] + 7 malonyl-CoA + 6 H(+) = noranthrone + holo-[ACP] + 7 CO2 + 7 CoA + 2 H2O. It participates in mycotoxin biosynthesis; sterigmatocystin biosynthesis. Its function is as follows. Non-reducing polyketide synthase; part of the gene cluster that mediates the biosynthesis of sterigmatocystin (ST), a polyketide-derived furanocoumarin which is part of the most toxic and carcinogenic compounds among the known mycotoxins. The first step in the biosynthesis of sterigmatocystin is the production of hexanoate by the fatty acid synthase (FAS) units stcJ and stcK. The polyketide backbone is assembled by the non-reducing polyketide synthase stcA by condensation of the starter hexanoyl-CoA and 7 malonyl-CoA extender units followed by cyclization and release of norsolorinic acid. Norsolorinic acid is the first stable intermediate in the biosynthesis of sterigmatocystin and is converted into averantin (AVN) by the ketoreductase stcE which reduces the hexanoate ketone to an alcohol. Averantin is then oxidized into 5'-hydroxyaverantin (HAVN) by the cytochrome P450 monooxygenase stcF. 5'-hydroxyaverantin is further converted to 5'-oxyaverantin (OAVN) by the 5'-hydroxyaverantin dehydrogenase stcG. The next step is the conversion of OAVN into averufin (AVF) which is catalyzed by a yet to be identified enzyme. The cytochrome P450 monooxygenase stcB and the flavin-binding monooxygenase stcW are both required for the conversion of averufin to 1-hydroxyversicolorone. The esterase stcI probably catalyzes the formation of versiconal hemiacetal acetate from 1-hydroxyversicolorone. The oxydoreductase stcN then probably catalyzes the biosynthetic step from versiconal to versicolorin B (VERB). The next step is performed by the versicolorin B desaturase stcL to produce versicolorin A (VERA). The ketoreductase stcU and the cytochrome P450 monooxygenase stcS are involved in the conversion of versicolorin A to demethylsterigmatocystin. The Baeyer-Villiger oxidas stcQ and the reductase stcR might be involved in the biosynthetic step from versicolorin A to demethylsterigmatocystin. The final step in the biosynthesis of sterigmatocystin is the methylation of demethylsterigmatocystin catalyzed by the methyltransferase stcP. In Emericella nidulans (strain FGSC A4 / ATCC 38163 / CBS 112.46 / NRRL 194 / M139) (Aspergillus nidulans), this protein is Norsolorinic acid synthase stcA.